Here is a 216-residue protein sequence, read N- to C-terminus: Urease accessory protein UreG (216 aa).

Residue 25-32 (GPVGSGKT) coordinates GTP.

The protein belongs to the SIMIBI class G3E GTPase family. UreG subfamily. In terms of assembly, homodimer. UreD, UreF and UreG form a complex that acts as a GTP-hydrolysis-dependent molecular chaperone, activating the urease apoprotein by helping to assemble the nickel containing metallocenter of UreC. The UreE protein probably delivers the nickel.

Its subcellular location is the cytoplasm. Its function is as follows. Facilitates the functional incorporation of the urease nickel metallocenter. This process requires GTP hydrolysis, probably effectuated by UreG. This is Urease accessory protein UreG from Burkholderia mallei (strain NCTC 10247).